A 414-amino-acid polypeptide reads, in one-letter code: UPF0754 membrane protein tlr2287 (414 aa).

Transmembrane regions (helical) follow at residues 2–22 and 386–406; these read ADIS…IGYF and AIVR…AGVL.

Belongs to the UPF0754 family.

The protein resides in the cell inner membrane. In Thermosynechococcus vestitus (strain NIES-2133 / IAM M-273 / BP-1), this protein is UPF0754 membrane protein tlr2287.